A 138-amino-acid polypeptide reads, in one-letter code: Peptide methionine sulfoxide reductase MsrB (138 aa).

The region spanning 15–137 (EAEWRAQLDP…NSASLGFEPR (123 aa)) is the MsrB domain. 4 residues coordinate Zn(2+): Cys-54, Cys-57, Cys-103, and Cys-106. Cys-126 (nucleophile) is an active-site residue.

Belongs to the MsrB Met sulfoxide reductase family. Requires Zn(2+) as cofactor.

The enzyme catalyses L-methionyl-[protein] + [thioredoxin]-disulfide + H2O = L-methionyl-(R)-S-oxide-[protein] + [thioredoxin]-dithiol. The chain is Peptide methionine sulfoxide reductase MsrB from Methylibium petroleiphilum (strain ATCC BAA-1232 / LMG 22953 / PM1).